The chain runs to 22 residues: Brain peptide MVPVPVHHMADELLRNGPDTVI (22 aa).

In Apis mellifera (Honeybee), this protein is Brain peptide MVPVPVHHMADELLRNGPDTVI.